Reading from the N-terminus, the 215-residue chain is Leucyl/phenylalanyl-tRNA--protein transferase (215 aa).

It belongs to the L/F-transferase family.

The protein resides in the cytoplasm. The enzyme catalyses N-terminal L-lysyl-[protein] + L-leucyl-tRNA(Leu) = N-terminal L-leucyl-L-lysyl-[protein] + tRNA(Leu) + H(+). It catalyses the reaction N-terminal L-arginyl-[protein] + L-leucyl-tRNA(Leu) = N-terminal L-leucyl-L-arginyl-[protein] + tRNA(Leu) + H(+). The catalysed reaction is L-phenylalanyl-tRNA(Phe) + an N-terminal L-alpha-aminoacyl-[protein] = an N-terminal L-phenylalanyl-L-alpha-aminoacyl-[protein] + tRNA(Phe). Its function is as follows. Functions in the N-end rule pathway of protein degradation where it conjugates Leu, Phe and, less efficiently, Met from aminoacyl-tRNAs to the N-termini of proteins containing an N-terminal arginine or lysine. The chain is Leucyl/phenylalanyl-tRNA--protein transferase from Campylobacter jejuni (strain RM1221).